The primary structure comprises 514 residues: GTPase-activating protein gyp1 (514 aa).

2 disordered regions span residues 17-65 (LWNG…QPPK) and 130-164 (LPRM…LHSS). Polar residues-rich tracts occupy residues 18–28 (WNGSSSATSDP) and 135–158 (RSTT…TTSR). A Rab-GAP TBC domain is found at 216–443 (GIPSEHRPIV…RMWDTYMAEG (228 aa)).

It is found in the golgi apparatus. It localises to the golgi stack. The protein localises to the cytoplasm. The protein resides in the nucleus. In terms of biological role, stimulates specifically the GTPase activity of ypt1. Functions on the Golgi as a negative regulator of ypt1. This is GTPase-activating protein gyp1 from Schizosaccharomyces pombe (strain 972 / ATCC 24843) (Fission yeast).